A 72-amino-acid chain; its full sequence is Cytochrome c oxidase subunit 2 (72 aa).

Residues 1–14 lie on the Mitochondrial intermembrane side of the membrane; that stretch reads MAHPSQLGFQDAAS. A helical membrane pass occupies residues 15-45; that stretch reads PVMEELLHFHDHALMIVFLISTLVLYIIVAM. At 46 to 72 the chain is on the mitochondrial matrix side; the sequence is VSTKLTNKYXLDSQEIEVIWTXLPAVI.

This sequence belongs to the cytochrome c oxidase subunit 2 family. As to quaternary structure, component of the cytochrome c oxidase (complex IV, CIV), a multisubunit enzyme composed of 14 subunits. The complex is composed of a catalytic core of 3 subunits MT-CO1, MT-CO2 and MT-CO3, encoded in the mitochondrial DNA, and 11 supernumerary subunits COX4I, COX5A, COX5B, COX6A, COX6B, COX6C, COX7A, COX7B, COX7C, COX8 and NDUFA4, which are encoded in the nuclear genome. The complex exists as a monomer or a dimer and forms supercomplexes (SCs) in the inner mitochondrial membrane with NADH-ubiquinone oxidoreductase (complex I, CI) and ubiquinol-cytochrome c oxidoreductase (cytochrome b-c1 complex, complex III, CIII), resulting in different assemblies (supercomplex SCI(1)III(2)IV(1) and megacomplex MCI(2)III(2)IV(2)). Found in a complex with TMEM177, COA6, COX18, COX20, SCO1 and SCO2. Interacts with TMEM177 in a COX20-dependent manner. Interacts with COX20. Interacts with COX16. Cu cation serves as cofactor.

The protein localises to the mitochondrion inner membrane. The catalysed reaction is 4 Fe(II)-[cytochrome c] + O2 + 8 H(+)(in) = 4 Fe(III)-[cytochrome c] + 2 H2O + 4 H(+)(out). Its function is as follows. Component of the cytochrome c oxidase, the last enzyme in the mitochondrial electron transport chain which drives oxidative phosphorylation. The respiratory chain contains 3 multisubunit complexes succinate dehydrogenase (complex II, CII), ubiquinol-cytochrome c oxidoreductase (cytochrome b-c1 complex, complex III, CIII) and cytochrome c oxidase (complex IV, CIV), that cooperate to transfer electrons derived from NADH and succinate to molecular oxygen, creating an electrochemical gradient over the inner membrane that drives transmembrane transport and the ATP synthase. Cytochrome c oxidase is the component of the respiratory chain that catalyzes the reduction of oxygen to water. Electrons originating from reduced cytochrome c in the intermembrane space (IMS) are transferred via the dinuclear copper A center (CU(A)) of subunit 2 and heme A of subunit 1 to the active site in subunit 1, a binuclear center (BNC) formed by heme A3 and copper B (CU(B)). The BNC reduces molecular oxygen to 2 water molecules using 4 electrons from cytochrome c in the IMS and 4 protons from the mitochondrial matrix. This is Cytochrome c oxidase subunit 2 (mt-co2) from Gomphosus varius (Bird wrasse).